The primary structure comprises 1399 residues: DNA-directed RNA polymerase subunit beta' (1399 aa).

Positions 70, 72, 85, and 88 each coordinate Zn(2+). Mg(2+) contacts are provided by Asp460, Asp462, and Asp464. Zn(2+)-binding residues include Cys814, Cys888, Cys895, and Cys898.

Belongs to the RNA polymerase beta' chain family. As to quaternary structure, the RNAP catalytic core consists of 2 alpha, 1 beta, 1 beta' and 1 omega subunit. When a sigma factor is associated with the core the holoenzyme is formed, which can initiate transcription. Mg(2+) serves as cofactor. Zn(2+) is required as a cofactor.

It carries out the reaction RNA(n) + a ribonucleoside 5'-triphosphate = RNA(n+1) + diphosphate. Its function is as follows. DNA-dependent RNA polymerase catalyzes the transcription of DNA into RNA using the four ribonucleoside triphosphates as substrates. This Ectopseudomonas mendocina (strain ymp) (Pseudomonas mendocina) protein is DNA-directed RNA polymerase subunit beta'.